The chain runs to 287 residues: X-box-binding protein 1 (287 aa).

The region spanning 61-117 (EEKMDRRKLKNRVAAQNARDKKKERSAKIEDVMRDLVEENRRLRAENERLRRQNKNL) is the bZIP domain. A disordered region spans residues 63–87 (KMDRRKLKNRVAAQNARDKKKERSA). The tract at residues 63–88 (KMDRRKLKNRVAAQNARDKKKERSAK) is basic motif. Basic and acidic residues predominate over residues 78–87 (ARDKKKERSA). Residues 89-117 (IEDVMRDLVEENRRLRAENERLRRQNKNL) form a leucine-zipper region.

Interacts with SUMO-conjugating enzyme ubc-9; the interaction is direct. Post-translationally, sumoylated. Sumoylation may negatively modulate the transcription of genes involved in the ER-stress-response.

It is found in the nucleus. Functionally, required for transcriptional regulation of the unfolded protein response (UPR) in the endoplasmic reticulum (ER) under stressed conditions, acting downstream of ire-1, and also maintaining ER homeostasis via a negative feedback loop, in parallel with ER kinase pek-1. May also regulate Golgi protein trafficking distal to the ER. Protects the host organism from the detrimental effects of mounting an innate immune response to microbes, such as the Gram-negative bacterium P.aeruginosa, probably by modulating the UPR. Its function is as follows. Plays a role in the unconventional cytoplasmic splicing processing of its own mRNA triggered by the endoplasmic reticulum (ER) transmembrane endoribonuclease ire-1: upon ER stress, the emerging xbp-1 polypeptide chain, as part of a mRNA-ribosome-nascent chain (R-RNC) complex, cotranslationally recruits its own unprocessed mRNA through transient docking to the ER membrane and translational pausing, therefore facilitating efficient ire-1-mediated xbp-1 mRNA isoform 2 production. Functions as a stress-inducible potent transcriptional activator during endoplasmic reticulum (ER) stress by inducing unfolded protein response (UPR) target genes via binding to the UPR element (UPRE). Plays a role in modulation of the UPR, lipid metabolism, proteostasis, and lifespan. In neurons, rescues stress resistance, increases longevity, and, drives expression of lysosomal genes in the intestine and activates the UPR in distal, non-neuronal cell types through a cell-nonautonomous mechanism. In neurons or intestine, plays a role in protection against proteotoxicity, acting via positive modulation of genes involved in lysosomal function, including lipases and the fatty-acid desaturase fat-6. Protection against proteotoxicity in neurons is dependent upon the transcription factor atf-6. This is X-box-binding protein 1 from Caenorhabditis elegans.